A 204-amino-acid polypeptide reads, in one-letter code: Large ribosomal subunit protein eL15 (204 aa).

The interval 155–204 (VHKHREQRGLTSAGRKSRGLGKGWRFSATRGGSQAKNWKRKNTKVFHRKR) is disordered. The segment covering 191 to 204 (NWKRKNTKVFHRKR) has biased composition (basic residues).

The protein belongs to the eukaryotic ribosomal protein eL15 family.

This is Large ribosomal subunit protein eL15 (rpl-15) from Caenorhabditis elegans.